The chain runs to 281 residues: Glutamate racemase (281 aa).

Residues 13-14 (DS) and 45-46 (YG) each bind substrate. Cys-76 serves as the catalytic Proton donor/acceptor. 77-78 (NT) provides a ligand contact to substrate. The Proton donor/acceptor role is filled by Cys-185. Residue 186 to 187 (TH) participates in substrate binding.

This sequence belongs to the aspartate/glutamate racemases family.

It carries out the reaction L-glutamate = D-glutamate. Its pathway is cell wall biogenesis; peptidoglycan biosynthesis. Its function is as follows. Provides the (R)-glutamate required for cell wall biosynthesis. This is Glutamate racemase from Rippkaea orientalis (strain PCC 8801 / RF-1) (Cyanothece sp. (strain PCC 8801)).